A 185-amino-acid polypeptide reads, in one-letter code: Ribosome-recycling factor (185 aa).

The protein belongs to the RRF family.

The protein resides in the cytoplasm. In terms of biological role, responsible for the release of ribosomes from messenger RNA at the termination of protein biosynthesis. May increase the efficiency of translation by recycling ribosomes from one round of translation to another. The polypeptide is Ribosome-recycling factor (Dichelobacter nodosus (strain VCS1703A)).